The sequence spans 98 residues: Integration host factor subunit beta (98 aa).

This sequence belongs to the bacterial histone-like protein family. Heterodimer of an alpha and a beta chain.

Its function is as follows. This protein is one of the two subunits of integration host factor, a specific DNA-binding protein that functions in genetic recombination as well as in transcriptional and translational control. This chain is Integration host factor subunit beta, found in Teredinibacter turnerae (strain ATCC 39867 / T7901).